The primary structure comprises 120 residues: Chaperonin GroEL (120 aa).

ATP is bound at residue 23–27 (DGTTT).

The protein belongs to the chaperonin (HSP60) family. Forms a cylinder of 14 subunits composed of two heptameric rings stacked back-to-back. Interacts with the co-chaperonin GroES.

Its subcellular location is the cytoplasm. It carries out the reaction ATP + H2O + a folded polypeptide = ADP + phosphate + an unfolded polypeptide.. Its function is as follows. Together with its co-chaperonin GroES, plays an essential role in assisting protein folding. The GroEL-GroES system forms a nano-cage that allows encapsulation of the non-native substrate proteins and provides a physical environment optimized to promote and accelerate protein folding. The polypeptide is Chaperonin GroEL (Mycolicibacterium chitae (Mycobacterium chitae)).